A 179-amino-acid polypeptide reads, in one-letter code: ATP-dependent protease subunit HslV (179 aa).

T7 is an active-site residue. Positions 163, 166, and 169 each coordinate Na(+).

This sequence belongs to the peptidase T1B family. HslV subfamily. A double ring-shaped homohexamer of HslV is capped on each side by a ring-shaped HslU homohexamer. The assembly of the HslU/HslV complex is dependent on binding of ATP.

The protein resides in the cytoplasm. It carries out the reaction ATP-dependent cleavage of peptide bonds with broad specificity.. Its activity is regulated as follows. Allosterically activated by HslU binding. In terms of biological role, protease subunit of a proteasome-like degradation complex believed to be a general protein degrading machinery. This Amoebophilus asiaticus (strain 5a2) protein is ATP-dependent protease subunit HslV.